The chain runs to 190 residues: T-cell receptor gamma chain C region 5/10-13 (190 aa).

The tract at residues 1-157 (DKRTDSDFSP…LQVTTTYAFY (157 aa)) is c region. Residues 158 to 178 (TYLILFFKSMVHLAFVVFCLF) form a helical membrane-spanning segment. Topologically, residues 179 to 190 (RRAAMSCDDQRS) are cytoplasmic.

It is found in the membrane. This chain is T-cell receptor gamma chain C region 5/10-13, found in Mus musculus (Mouse).